Reading from the N-terminus, the 269-residue chain is Tryptophan synthase alpha chain (269 aa).

Catalysis depends on proton acceptor residues Glu49 and Asp60.

The protein belongs to the TrpA family. In terms of assembly, tetramer of two alpha and two beta chains.

It catalyses the reaction (1S,2R)-1-C-(indol-3-yl)glycerol 3-phosphate + L-serine = D-glyceraldehyde 3-phosphate + L-tryptophan + H2O. The protein operates within amino-acid biosynthesis; L-tryptophan biosynthesis; L-tryptophan from chorismate: step 5/5. In terms of biological role, the alpha subunit is responsible for the aldol cleavage of indoleglycerol phosphate to indole and glyceraldehyde 3-phosphate. The protein is Tryptophan synthase alpha chain of Pseudomonas putida (strain GB-1).